A 255-amino-acid polypeptide reads, in one-letter code: Staphylococcal secretory antigen ssaA1 (255 aa).

Positions 1–26 are cleaved as a signal peptide; that stretch reads MKKIVTATIATAGLATIAFAGHDAQA. A run of 3 repeats spans residues 75–78, 88–91, and 98–101. Residues 75-101 form a 3 X 4 AA repeats of Y-N-N-Y region; it reads YNNYNTYSYNNASYNNYYNHSYQYNNY. The region spanning 134–255 is the Peptidase C51 domain; it reads AAPSSNGRSI…NQAGSYNFIH (122 aa).

It is found in the secreted. In terms of biological role, not known; immunogenic protein. The polypeptide is Staphylococcal secretory antigen ssaA1 (ssaA1) (Staphylococcus aureus (strain MW2)).